Consider the following 228-residue polypeptide: L-ribulose-5-phosphate 4-epimerase UlaF (228 aa).

Residues 26–27, 43–44, and 72–73 contribute to the substrate site; these read GN, SG, and SS. 3 residues coordinate Zn(2+): D74, H93, and H95. The active-site Proton donor/acceptor is the D118. H167 serves as a coordination point for Zn(2+). Catalysis depends on Y225, which acts as the Proton donor/acceptor.

The protein belongs to the aldolase class II family. AraD/FucA subfamily. Requires Zn(2+) as cofactor.

The enzyme catalyses L-ribulose 5-phosphate = D-xylulose 5-phosphate. The protein operates within cofactor degradation; L-ascorbate degradation; D-xylulose 5-phosphate from L-ascorbate: step 4/4. Functionally, catalyzes the isomerization of L-ribulose 5-phosphate to D-xylulose 5-phosphate. Is involved in the anaerobic L-ascorbate utilization. This is L-ribulose-5-phosphate 4-epimerase UlaF from Escherichia coli (strain ATCC 8739 / DSM 1576 / NBRC 3972 / NCIMB 8545 / WDCM 00012 / Crooks).